The sequence spans 457 residues: Ribosomal RNA-processing protein 8 (457 aa).

Disordered stretches follow at residues Leu52–Arg114 and Ser148–Arg235. Phosphoserine is present on residues Ser62, Ser64, and Ser105. Residues Ser148–Thr165 are compositionally biased toward polar residues. Phosphoserine occurs at positions 172 and 177. Residues Glu174 to Thr183 are compositionally biased toward polar residues. Positions Leu184–Phe203 are enriched in basic residues. 6 residues coordinate S-adenosyl-L-methionine: His282, Gly317, Asp335, Asp347, Met348, and Cys364.

Belongs to the methyltransferase superfamily. RRP8 family. Component of the eNoSC complex, composed of SIRT1, SUV39H1 and RRP8.

Its subcellular location is the nucleus. It is found in the nucleolus. Essential component of the eNoSC (energy-dependent nucleolar silencing) complex, a complex that mediates silencing of rDNA in response to intracellular energy status and acts by recruiting histone-modifying enzymes. The eNoSC complex is able to sense the energy status of cell: upon glucose starvation, elevation of NAD(+)/NADP(+) ratio activates SIRT1, leading to histone H3 deacetylation followed by dimethylation of H3 at 'Lys-9' (H3K9me2) by SUV39H1 and the formation of silent chromatin in the rDNA locus. In the complex, RRP8 binds to H3K9me2 and probably acts as a methyltransferase. Its substrates are however unknown. This chain is Ribosomal RNA-processing protein 8 (Rrp8), found in Rattus norvegicus (Rat).